A 958-amino-acid polypeptide reads, in one-letter code: MTAREEPATTFARRHIGPSSRDIAAMLETVGAKSLAALMNEALPPSIRQAAPLDLGQGLSEGLSETEALAHMQSLAAQNQAFTSLIGQGYSGTILPAVIQRNILENPAWYTAYTPYQPEISQGRLEALFNFQTMICDLTGLDVANASLLDEATAVAEAMALAERASSVKTKAFFVDHEVHPQTLAVLRTRAEPLGWTLVTGDPLRDLDKADVFGAVLQYPGTSGVVRDLRPAISTLKAKGGLAVVAADLLALTLLASPGVLGADIAVGSAQRFGVPMGYGGPHAAYMAVRDTLKRLLPGRIVGLSVDSRGAPAYRLALQTREQHIRREKATSNICTAQVLLAVISSMYAVYHGPEGLAQIARTVHRRTATLAAGLTRLGFAPLNDAAFDTLTVSVGDRQNEIAGRALSQGINLRINADHTLGIALDELTTPEIVEAVWRTFGAAFSYADVEAHAPDLLPADLGRRTAYLTHPVFHAHRSETELLRYMRKLSDRDLALDRAMIPLGSCTMKLNATTEMIPLTWPAFAGLHPFAPCEQAEGYYALFEEFEQWLIDITGYDAISLQPNSGAQGEYAGLLAIRGYHAARGDSHRTVCLIPSSAHGTNPASANMAGMEVVVVACDARGDVDVDDLRAKAAQHADRLAAIMITYPSTHGVFEERIREICDIVHSHGGQVYLDGANMNAQVGLSRPGDYGADVSHLNLHKTFCIPHGGGGPGMGPIGVKAHLASFLPGHPATDGATPPAVGAVSAAPFGSASILTISYIYVLMMGGEGLTRATEVAILNANYVAQRLDPHFPVLYRNVKGRVAHECIIDPRALKAETGVTVDDIAKRLIDYGFHAPTMSFPVPGTLMIEPTESESKAELDRFCDAMIAIRREIAEIEAGRWSVEASPLRHAPHTVHDIADDTWSRPYSRAQGCFPAGTSRLDKYWCPVGRVDNAYGDRNLVCSCPPMEDYAQAAE.

Lys703 bears the N6-(pyridoxal phosphate)lysine mark.

Belongs to the GcvP family. The glycine cleavage system is composed of four proteins: P, T, L and H. It depends on pyridoxal 5'-phosphate as a cofactor.

The enzyme catalyses N(6)-[(R)-lipoyl]-L-lysyl-[glycine-cleavage complex H protein] + glycine + H(+) = N(6)-[(R)-S(8)-aminomethyldihydrolipoyl]-L-lysyl-[glycine-cleavage complex H protein] + CO2. The glycine cleavage system catalyzes the degradation of glycine. The P protein binds the alpha-amino group of glycine through its pyridoxal phosphate cofactor; CO(2) is released and the remaining methylamine moiety is then transferred to the lipoamide cofactor of the H protein. The sequence is that of Glycine dehydrogenase (decarboxylating) from Nitrobacter hamburgensis (strain DSM 10229 / NCIMB 13809 / X14).